A 557-amino-acid polypeptide reads, in one-letter code: Multidrug transporter FLR1 (557 aa).

3 N-linked (GlcNAc...) asparagine glycosylation sites follow: Asn33, Asn48, and Asn106. The segment covering 44-57 (SESSNMSFNSGSEE) has biased composition (low complexity). The interval 44–67 (SESSNMSFNSGSEENSQEKSVEDL) is disordered. 8 helical membrane-spanning segments follow: residues 113–133 (ALII…SSIY), 149–169 (VVGT…PIVF), 181–201 (LPVY…CALA), 204–224 (FAGL…ALST), 238–258 (LALV…LAPL), 271–291 (WIFW…TFFF), 355–375 (LYIA…PIVF), and 387–407 (GLAY…LLVF). The N-linked (GlcNAc...) asparagine glycan is linked to Asn418. 4 helical membrane passes run 426–446 (TLIL…MFGW), 450–470 (VHWI…FNIF), 484–506 (YVAS…FPLF), and 521–541 (VAWG…IPFV).

The protein belongs to the major facilitator superfamily.

The protein resides in the cell membrane. In terms of biological role, multidrug transporter that confers resistance to 5-flucytosine (5-FC) and clotrimazole. Also confers resistance to benomyl, but not 4-nitroquinoline-N-oxide, cycloheximide, or fluconazole. Plays direct roles in extrusion of 5-flucytosine and clotrimazole. This Candida glabrata (strain ATCC 2001 / BCRC 20586 / JCM 3761 / NBRC 0622 / NRRL Y-65 / CBS 138) (Yeast) protein is Multidrug transporter FLR1.